Here is a 210-residue protein sequence, read N- to C-terminus: Probable GTP-binding protein EngB (210 aa).

In terms of domain architecture, EngB-type G spans 25–199 (CGIEVAFAGR…RQKLDSWFSE (175 aa)). GTP is bound by residues 33–40 (GRSNAGKS), 60–64 (GRTQL), 78–81 (DLPG), 145–148 (TKAD), and 178–180 (FSS). Serine 40 and threonine 62 together coordinate Mg(2+).

It belongs to the TRAFAC class TrmE-Era-EngA-EngB-Septin-like GTPase superfamily. EngB GTPase family. Mg(2+) serves as cofactor.

Functionally, necessary for normal cell division and for the maintenance of normal septation. This chain is Probable GTP-binding protein EngB, found in Salmonella dublin (strain CT_02021853).